The following is an 88-amino-acid chain: Small ribosomal subunit protein bS16c (88 aa).

This sequence belongs to the bacterial ribosomal protein bS16 family.

The protein localises to the plastid. Its subcellular location is the chloroplast. This is Small ribosomal subunit protein bS16c from Solanum bulbocastanum (Wild potato).